The following is a 710-amino-acid chain: multidrug resistance regulator 2 (710 aa).

Residues 11-37 constitute a DNA-binding region (zn(2)-C6 fungal-type); that stretch reads CDACRSRKIKCNRQTPCASCHKSKRDC. The next 2 membrane-spanning stretches (helical) occupy residues 475–495 and 525–545; these read DLVI…LYLF and LFLA…TNFL.

The protein localises to the nucleus. Its subcellular location is the membrane. Its function is as follows. Transcription factor that controls the expression of CDR1, the major multidrug efflux pump. Required for yeast cell adherence to silicone substrate and plays a role in virulence. The chain is multidrug resistance regulator 2 from Candida albicans (strain SC5314 / ATCC MYA-2876) (Yeast).